Consider the following 175-residue polypeptide: Pituitary adenylate cyclase-activating polypeptide (175 aa).

The N-terminal stretch at 1–24 is a signal peptide; sequence MTMCSGARLALLVYGIIMHSSVSC. Positions 25–78 are excised as a propeptide; sequence SPAAGLSFPGIRPEDEAYDQDGNPLQDFYDWDPPGVGSPASALRDAYALYYPAD. An important for receptor binding region spans residues 149–157; it reads VKKYLAAVL. L157 is modified (leucine amide). Residue K168 is modified to Lysine amide. Positions 172 to 175 are excised as a propeptide; the sequence is IAYL.

This sequence belongs to the glucagon family.

It is found in the secreted. PACAP is a neuropeptide involved in diverse array of physiological processes through activating the PACAP subfamily of class B1 G protein-coupled receptors: VIP receptor 1 (VIPR1), VIP receptor 2 (VIPR2), and PACAP type I receptor (ADCYAP1R1). Exerts neuroprotective and general cytoprotective effects due to anti-apoptotic, anti-inflammatory, and antioxidant actions. Promotes neuron projection development through the RAPGEF2/Rap1/B-Raf/ERK pathway. In chromaffin cells, induces long-lasting increase of intracellular calcium concentrations and neuroendocrine secretion. Involved in the control of glucose homeostasis, induces insulin secretion by pancreatic beta cells. PACAP exists in two bioactive forms from proteolysis of the same precursor protein, PACAP27 and PACAP38, which differ by eleven amino acid residues in the C-terminus. This chain is Pituitary adenylate cyclase-activating polypeptide, found in Mus musculus (Mouse).